The following is a 697-amino-acid chain: Polyribonucleotide nucleotidyltransferase (697 aa).

The Mg(2+) site is built by Asp488 and Asp494. The region spanning 555 to 614 is the KH domain; that stretch reads PTFEVITINPDKIRDVIGKGGATIRQITEETKAAIDIEDNGTVRVFGETKAAARAAIAKI. Residues 624 to 692 enclose the S1 motif domain; it reads GKIYDGKVIR…NRGRIKLSMK (69 aa).

Belongs to the polyribonucleotide nucleotidyltransferase family. Component of the RNA degradosome, which is a multiprotein complex involved in RNA processing and mRNA degradation. Requires Mg(2+) as cofactor.

It is found in the cytoplasm. It carries out the reaction RNA(n+1) + phosphate = RNA(n) + a ribonucleoside 5'-diphosphate. Involved in mRNA degradation. Catalyzes the phosphorolysis of single-stranded polyribonucleotides processively in the 3'- to 5'-direction. This chain is Polyribonucleotide nucleotidyltransferase, found in Acinetobacter baylyi (strain ATCC 33305 / BD413 / ADP1).